A 330-amino-acid chain; its full sequence is uncharacterized protein (330 aa).

It to H.influenzae HI_0461.

This is an uncharacterized protein from Escherichia coli (strain K12).